We begin with the raw amino-acid sequence, 3390 residues long: Genome polyprotein (3390 aa).

Positions 1–15 (MNNQRKKTGKPSINM) are interaction with host EXOC1. Residues 1–100 (MNNQRKKTGK…MLSIINKRKK (100 aa)) are Cytoplasmic-facing. The interval 37-72 (LLNGQGPMKLVMAFIAFLRFLAIPPTAGVLARWGTF) is hydrophobic; homodimerization of capsid protein C. A propeptide spans 101–114 (TSLCLMMMLPATLA) (ER anchor for the capsid protein C, removed in mature form by serine protease NS3). A helical transmembrane segment spans residues 101–118 (TSLCLMMMLPATLAFHLT). Over 119–243 (SRDGEPRMIV…VEKVETWALR (125 aa)) the chain is Extracellular. N-linked (GlcNAc...) asparagine; by host glycosylation is present at Asn183. The chain crosses the membrane as a helical span at residues 244 to 264 (HPGFTILALFLAHYIGTSLTQ). Position 265 (Lys265) is a topological domain, cytoplasmic. The helical transmembrane segment at 266 to 280 (VVIFILLMLVTPSMT) threads the bilayer. Residues 281 to 723 (MRCVGVGNRD…VHQIFGSAYT (443 aa)) are Extracellular-facing. 4 cysteine pairs are disulfide-bonded: Cys283–Cys310, Cys340–Cys401, Cys354–Cys385, and Cys372–Cys396. N-linked (GlcNAc...) asparagine; by host glycosylation is present at Asn347. The interval 378–391 (DRGWGNGCGLFGKG) is fusion peptide. N-linked (GlcNAc...) asparagine; by host glycosylation occurs at Asn433. 2 cysteine pairs are disulfide-bonded: Cys463/Cys563 and Cys580/Cys611. Residues 724-744 (ALFSGVSWIMKIGIGVLLTWI) form a helical membrane-spanning segment. Over 745-750 (GLNSKN) the chain is Cytoplasmic. The helical transmembrane segment at 751-771 (TSMSFSCIAIGIITLYLGVVV) threads the bilayer. The Extracellular segment spans residues 772 to 1193 (QADMGCVINW…MIGSNASDRM (422 aa)). Cystine bridges form between Cys777/Cys788, Cys828/Cys916, Cys952/Cys996, Cys1053/Cys1102, Cys1064/Cys1086, and Cys1085/Cys1089. 2 N-linked (GlcNAc...) asparagine; by host glycosylation sites follow: Asn903 and Asn980. N-linked (GlcNAc...) asparagine; by host glycosylation is found at Asn1132 and Asn1188. Residues 1194–1218 (GMGVTYLALIATFKIQPFLALGFFL) traverse the membrane as a helical segment. Topologically, residues 1219 to 1224 (RKLTSR) are cytoplasmic. The chain crosses the membrane as a helical span at residues 1225 to 1243 (ENLLLGVGLAMAATLRLPE). Residues 1244–1267 (DIEQMANGIALGLMALKLITQFET) are Lumenal-facing. A helical transmembrane segment spans residues 1268 to 1288 (YQLWTALVSLTCSNTIFTLTV). Residue Ala1289 is a topological domain, cytoplasmic. Residues 1290-1308 (WRTATLILAGISLLPVCQS) traverse the membrane as a helical segment. The Lumenal segment spans residues 1309–1315 (SSMRKTD). The helical transmembrane segment at 1316-1336 (WLPMTVAAMGVPPLPLFIFSL) threads the bilayer. Over 1337–1344 (KDTLKRRS) the chain is Cytoplasmic. The chain crosses the membrane as a helical span at residues 1345 to 1365 (WPLNEGVMAVGLVSILASSLL). The Lumenal portion of the chain corresponds to 1366 to 1368 (RND). The chain crosses the membrane as a helical span at residues 1369 to 1389 (VPMAGPLVAGGLLIACYVITG). Topologically, residues 1390 to 1443 (TSADLTVEKAADVTWEEEAEQTGVSHNLMITVDDDGTMRIKDDETENILTVLLK) are cytoplasmic. The segment at 1396–1435 (VEKAADVTWEEEAEQTGVSHNLMITVDDDGTMRIKDDETE) is interacts with and activates NS3 protease. Residues 1444–1464 (TALLIVSGIFPCSIPATLLVW) constitute an intramembrane region (helical). Topologically, residues 1465–2146 (HTWQKQTQRS…VEELPETMET (682 aa)) are cytoplasmic. Positions 1474 to 1651 (SGVLWDVPSP…NAEPDGPTPE (178 aa)) constitute a Peptidase S7 domain. Catalysis depends on charge relay system; for serine protease NS3 activity residues His1524, Asp1548, and Ser1608. The Helicase ATP-binding domain maps to 1654-1810 (EEMFKKRNLT…QSNAPIQDEE (157 aa)). The interval 1658–1661 (KKRN) is important for RNA-binding. An ATP-binding site is contributed by 1667 to 1674 (LHPGSGKT). Positions 1758 to 1761 (DEAH) match the DEAH box motif. Positions 1821-1986 (GNEWITDFVG…GIIPALFEPE (166 aa)) constitute a Helicase C-terminal domain. The residue at position 1862 (Lys1862) is an N6-acetyllysine; by host. The chain crosses the membrane as a helical span at residues 2147 to 2167 (LLLLGLMILLTGGAMLFLISG). Topologically, residues 2168-2169 (KG) are lumenal. The helical intramembrane region spans 2170 to 2190 (IGKTSIGLICVIASSGMLWMA). Asp2191 is a topological domain (lumenal). A helical transmembrane segment spans residues 2192-2212 (VPLQWIASAIVLEFFMMVLLI). The Cytoplasmic portion of the chain corresponds to 2213–2227 (PEPEKQRTPQDNQLA). Residues 2228-2248 (YVVIGILTLAAIVAANEMGLL) form a helical membrane-spanning segment. Residues 2249–2273 (ETTKRDLGMSKEPGVVSPTSYLDVD) lie on the Lumenal side of the membrane. The helical intramembrane region spans 2274–2294 (LHPASAWTLYAVATTVITPML). Residues 2295–2305 (RHTIENSTANV) lie on the Lumenal side of the membrane. Residues Asn2300 and Asn2304 are each glycosylated (N-linked (GlcNAc...) asparagine; by host). Residues 2306-2326 (SLAAIANQAVVLMGLDKGWPI) constitute an intramembrane region (helical). Residues 2327-2346 (SKMDLGVPLLALGCYSQVNP) lie on the Lumenal side of the membrane. The chain crosses the membrane as a helical span at residues 2347–2367 (LTLIAAVLLLVTHYAIIGPGL). Over 2368–2412 (QAKATREAQKRTAAGIMKNPTVDGIMTIDLDPVIYDSKFEKQLGQ) the chain is Cytoplasmic. The helical transmembrane segment at 2413–2433 (VMLLVLCAVQLLLMRTSWALC) threads the bilayer. Residues 2434–2458 (EVLTLATGPITTLWEGSPGKFWNTT) lie on the Lumenal side of the membrane. N-linked (GlcNAc...) asparagine; by host glycosylation is present at Asn2456. Residues 2459–2479 (IAVSMANIFRGSYLAGAGLAF) form a helical membrane-spanning segment. Residues 2480–3390 (SIMKSVGTGK…KEEESEGAIW (911 aa)) lie on the Cytoplasmic side of the membrane. The mRNA cap 0-1 NS5-type MT domain occupies 2492–2753 (TGSQGETLGE…DVDLGAGTRH (262 aa)). Ser2546 contacts S-adenosyl-L-methionine. Ser2546 is subject to Phosphoserine. Residue Lys2551 is the For 2'-O-MTase activity of the active site. An SUMO-interacting motif motif is present at residues 2567–2570 (VIDL). S-adenosyl-L-methionine-binding residues include Gly2576, Trp2577, Thr2594, Lys2595, Asp2621, and Val2622. Asp2636 (for 2'-O-MTase activity) is an active-site residue. Ile2637 contacts S-adenosyl-L-methionine. Residues Lys2670 and Glu2706 each act as for 2'-O-MTase activity in the active site. An S-adenosyl-L-methionine-binding site is contributed by Tyr2708. Residues Glu2927, His2931, Cys2936, and Cys2939 each coordinate Zn(2+). The 151-residue stretch at 3018 to 3168 (AMYADDTAGW…PIDDRFANAL (151 aa)) folds into the RdRp catalytic domain. Positions 3202, 3218, and 3337 each coordinate Zn(2+).

The protein in the N-terminal section; belongs to the class I-like SAM-binding methyltransferase superfamily. mRNA cap 0-1 NS5-type methyltransferase family. In terms of assembly, homodimer. Interacts (via N-terminus) with host EXOC1 (via C-terminus); this interaction results in EXOC1 degradation through the proteasome degradation pathway. As to quaternary structure, forms heterodimers with envelope protein E in the endoplasmic reticulum and Golgi. Homodimer; in the endoplasmic reticulum and Golgi. Interacts with protein prM. Interacts with non-structural protein 1. In terms of assembly, homodimer; Homohexamer when secreted. Interacts with envelope protein E. As to quaternary structure, interacts (via N-terminus) with serine protease NS3. Forms a heterodimer with serine protease NS3. May form homooligomers. In terms of assembly, forms a heterodimer with NS2B. Interacts with NS4B. Interacts with unphosphorylated RNA-directed RNA polymerase NS5; this interaction stimulates RNA-directed RNA polymerase NS5 guanylyltransferase activity. As to quaternary structure, interacts with host MAVS; this interaction inhibits the synthesis of IFN-beta. Interacts with host AUP1; the interaction occurs in the presence of Dengue virus NS4B and induces lipophagy which facilitates production of virus progeny particles. Interacts with serine protease NS3. In terms of assembly, homodimer. Interacts with host STAT2; this interaction inhibits the phosphorylation of the latter, and, when all viral proteins are present (polyprotein), targets STAT2 for degradation. Interacts with serine protease NS3. In terms of processing, specific enzymatic cleavages in vivo yield mature proteins. Cleavages in the lumen of endoplasmic reticulum are performed by host signal peptidase, whereas cleavages in the cytoplasmic side are performed by serine protease NS3. Signal cleavage at the 2K-4B site requires a prior NS3 protease-mediated cleavage at the 4A-2K site. Cleaved in post-Golgi vesicles by a host furin, releasing the mature small envelope protein M, and peptide pr. This cleavage is incomplete as up to 30% of viral particles still carry uncleaved prM. Post-translationally, N-glycosylated. In terms of processing, N-glycosylated. The excreted form is glycosylated and this is required for efficient secretion of the protein from infected cells. Acetylated by host KAT5. Acetylation modulates NS3 RNA-binding and unwinding activities and plays an important positive role for viral replication. Post-translationally, sumoylation of RNA-directed RNA polymerase NS5 increases NS5 protein stability allowing proper viral RNA replication. In terms of processing, phosphorylated on serines residues. This phosphorylation may trigger NS5 nuclear localization.

The protein resides in the virion. The protein localises to the host nucleus. It localises to the host cytoplasm. Its subcellular location is the host perinuclear region. It is found in the secreted. The protein resides in the virion membrane. The protein localises to the host endoplasmic reticulum membrane. It localises to the host mitochondrion. The enzyme catalyses Selective hydrolysis of -Xaa-Xaa-|-Yaa- bonds in which each of the Xaa can be either Arg or Lys and Yaa can be either Ser or Ala.. The catalysed reaction is RNA(n) + a ribonucleoside 5'-triphosphate = RNA(n+1) + diphosphate. It catalyses the reaction a ribonucleoside 5'-triphosphate + H2O = a ribonucleoside 5'-diphosphate + phosphate + H(+). It carries out the reaction ATP + H2O = ADP + phosphate + H(+). The enzyme catalyses a 5'-end (5'-triphosphoguanosine)-ribonucleoside in mRNA + S-adenosyl-L-methionine = a 5'-end (N(7)-methyl 5'-triphosphoguanosine)-ribonucleoside in mRNA + S-adenosyl-L-homocysteine. The catalysed reaction is a 5'-end (N(7)-methyl 5'-triphosphoguanosine)-ribonucleoside in mRNA + S-adenosyl-L-methionine = a 5'-end (N(7)-methyl 5'-triphosphoguanosine)-(2'-O-methyl-ribonucleoside) in mRNA + S-adenosyl-L-homocysteine + H(+). Plays a role in virus budding by binding to the cell membrane and gathering the viral RNA into a nucleocapsid that forms the core of a mature virus particle. During virus entry, may induce genome penetration into the host cytoplasm after hemifusion induced by the surface proteins. Can migrate to the cell nucleus where it modulates host functions. Overcomes the anti-viral effects of host EXOC1 by sequestering and degrading the latter through the proteasome degradation pathway. In terms of biological role, inhibits RNA silencing by interfering with host Dicer. Its function is as follows. Prevents premature fusion activity of envelope proteins in trans-Golgi by binding to envelope protein E at pH6.0. After virion release in extracellular space, gets dissociated from E dimers. Functionally, acts as a chaperone for envelope protein E during intracellular virion assembly by masking and inactivating envelope protein E fusion peptide. prM is the only viral peptide matured by host furin in the trans-Golgi network probably to avoid catastrophic activation of the viral fusion activity in acidic Golgi compartment prior to virion release. prM-E cleavage is inefficient, and many virions are only partially matured. These uncleaved prM would play a role in immune evasion. May play a role in virus budding. Exerts cytotoxic effects by activating a mitochondrial apoptotic pathway through M ectodomain. May display a viroporin activity. In terms of biological role, binds to host cell surface receptor and mediates fusion between viral and cellular membranes. Envelope protein is synthesized in the endoplasmic reticulum in the form of heterodimer with protein prM. They play a role in virion budding in the ER, and the newly formed immature particle is covered with 60 spikes composed of heterodimer between precursor prM and envelope protein E. The virion is transported to the Golgi apparatus where the low pH causes dissociation of PrM-E heterodimers and formation of E homodimers. prM-E cleavage is inefficient, and many virions are only partially matured. These uncleaved prM would play a role in immune evasion. Its function is as follows. Involved in immune evasion, pathogenesis and viral replication. Once cleaved off the polyprotein, is targeted to three destinations: the viral replication cycle, the plasma membrane and the extracellular compartment. Essential for viral replication. Required for formation of the replication complex and recruitment of other non-structural proteins to the ER-derived membrane structures. Excreted as a hexameric lipoparticle that plays a role against host immune response. Antagonizing the complement function. Binds to the host macrophages and dendritic cells. Inhibits signal transduction originating from Toll-like receptor 3 (TLR3). Functionally, disrupts the host endothelial glycocalyx layer of host pulmonary microvascular endothelial cells, inducing degradation of sialic acid and shedding of heparan sulfate proteoglycans. NS1 induces expression of sialidases, heparanase, and activates cathepsin L, which activates heparanase via enzymatic cleavage. These effects are probably linked to the endothelial hyperpermeability observed in severe dengue disease. Component of the viral RNA replication complex that functions in virion assembly and antagonizes the host immune response. In terms of biological role, required cofactor for the serine protease function of NS3. May have membrane-destabilizing activity and form viroporins. Its function is as follows. Displays three enzymatic activities: serine protease, NTPase and RNA helicase. NS3 serine protease, in association with NS2B, performs its autocleavage and cleaves the polyprotein at dibasic sites in the cytoplasm: C-prM, NS2A-NS2B, NS2B-NS3, NS3-NS4A, NS4A-2K and NS4B-NS5. NS3 RNA helicase binds RNA and unwinds dsRNA in the 3' to 5' direction. Functionally, regulates the ATPase activity of the NS3 helicase activity. NS4A allows NS3 helicase to conserve energy during unwinding. Plays a role in the inhibition of the host innate immune response. Interacts with host MAVS and thereby prevents the interaction between RIGI and MAVS. In turn, IFN-beta production is impaired. Interacts with host AUP1 which mediates induction of lipophagy in host cells and facilitates production of virus progeny particles. Functions as a signal peptide for NS4B and is required for the interferon antagonism activity of the latter. In terms of biological role, induces the formation of ER-derived membrane vesicles where the viral replication takes place. Inhibits interferon (IFN)-induced host STAT1 phosphorylation and nuclear translocation, thereby preventing the establishment of cellular antiviral state by blocking the IFN-alpha/beta pathway. Its function is as follows. Replicates the viral (+) and (-) RNA genome, and performs the capping of genomes in the cytoplasm. NS5 methylates viral RNA cap at guanine N-7 and ribose 2'-O positions. Besides its role in RNA genome replication, also prevents the establishment of cellular antiviral state by blocking the interferon-alpha/beta (IFN-alpha/beta) signaling pathway. Inhibits host TYK2 and STAT2 phosphorylation, thereby preventing activation of JAK-STAT signaling pathway. This chain is Genome polyprotein, found in Dengue virus type 3 (strain China/80-2/1980) (DENV-3).